The sequence spans 631 residues: Interferon-induced GTP-binding protein Mx1 (631 aa).

The Dynamin-type G domain occupies Asp33–Pro306. The G1 motif stretch occupies residues Gly43–Ser50. Gly43 to Ser50 contributes to the GTP binding site. The interval Val68 to Arg70 is G2 motif. The G3 motif stretch occupies residues Asp144–Gly147. GTP-binding positions include Asp144–Ile148 and Thr213–Asp216. The G4 motif stretch occupies residues Thr213–Asp216. A G5 motif region spans residues Lys245–Gly248. The interval Leu307–Glu332 is bundle signaling element (BSE). Residues Glu332 to Cys499 form a middle domain region. Residues Asp333 to Glu601 form a stalk region. The interval Lys520 to Lys522 is critical for lipid-binding. One can recognise a GED domain in the interval Thr543 to Asp631.

It belongs to the TRAFAC class dynamin-like GTPase superfamily. Dynamin/Fzo/YdjA family. In terms of assembly, homooligomer. Oligomerizes into multimeric filamentous or ring-like structures by virtue of its stalk domain. Oligomerization is critical for GTPase activity, protein stability, and recognition of viral target structures. Interacts with TRPC1, TRPC3, TRPC4, TRPC5, TRPC6 and TRPC7. Interacts with HSPA5. Interacts with TUBB/TUBB5. Interacts with DDX39A and DDX39B. In terms of processing, ISGylated.

It localises to the cytoplasm. The protein resides in the nucleus. It is found in the endoplasmic reticulum membrane. The protein localises to the perinuclear region. Its function is as follows. Interferon-induced dynamin-like GTPase with antiviral activity against influenza A virus, (IAV), influenza B virus (IBV) and Thogoto virus (THOV). Inhibits FLUAV by interfering with the process of primary transcription, probably by affecting the viral polymerase function. The chain is Interferon-induced GTP-binding protein Mx1 (Mx1) from Mus musculus (Mouse).